Consider the following 461-residue polypeptide: Vitamin K-dependent protein C (461 aa).

A signal peptide spans 1–18; the sequence is MWQFRIFLLFASTWGISG. Residues 19–41 constitute a propeptide that is removed on maturation; the sequence is VSAHPDPVFSSSEGAHQVLRVRR. The region spanning 42–87 is the Gla domain; it reads ANSFLEEVRAGSLERECMEEICDFEEAQEIFQNVEDTLAFWIKYFD. Residues glutamate 47, glutamate 48, glutamate 55, glutamate 57, glutamate 60, glutamate 61, glutamate 66, glutamate 67, glutamate 70, and glutamate 76 each carry the 4-carboxyglutamate modification. Cysteine 58 and cysteine 63 are disulfide-bonded. 9 disulfide bridges follow: cysteine 91/cysteine 110, cysteine 100/cysteine 105, cysteine 104/cysteine 119, cysteine 121/cysteine 130, cysteine 139/cysteine 150, cysteine 146/cysteine 159, cysteine 161/cysteine 174, cysteine 182/cysteine 320, and cysteine 239/cysteine 255. EGF-like domains follow at residues 96-131 and 135-175; these read LDHQCDSPCCGHGTCIDGLGGFSCSCDKGWEGRFCQ and GFQD…MHCR. Aspartate 112 carries the (3R)-3-hydroxyaspartate modification. The Peptidase S1 domain occupies 213 to 450; that stretch reads IVNGTLTKQG…YLKWIHSYIG (238 aa). Asparagine 215 carries an N-linked (GlcNAc...) asparagine glycan. The active-site Charge relay system is the histidine 254. N-linked (GlcNAc...) asparagine glycosylation is present at asparagine 291. The active-site Charge relay system is the aspartate 300. Residue asparagine 355 is glycosylated (N-linked (GlcNAc...) asparagine). Disulfide bonds link cysteine 373–cysteine 387 and cysteine 398–cysteine 426. Serine 402 acts as the Charge relay system in catalysis.

This sequence belongs to the peptidase S1 family. In terms of assembly, synthesized as a single chain precursor, which is cleaved into a light chain and a heavy chain held together by a disulfide bond. The enzyme is then activated by thrombin, which cleaves a tetradecapeptide from the amino end of the heavy chain; this reaction, which occurs at the surface of endothelial cells, is strongly promoted by thrombomodulin. In terms of processing, the vitamin K-dependent, enzymatic carboxylation of some Glu residues allows the modified protein to bind calcium. The iron and 2-oxoglutarate dependent 3-hydroxylation of aspartate and asparagine is (R) stereospecific within EGF domains. Plasma; synthesized in the liver.

The protein resides in the secreted. The protein localises to the golgi apparatus. It localises to the endoplasmic reticulum. The enzyme catalyses Degradation of blood coagulation factors Va and VIIIa.. Functionally, protein C is a vitamin K-dependent serine protease that regulates blood coagulation by inactivating factors Va and VIIIa in the presence of calcium ions and phospholipids. Exerts a protective effect on the endothelial cell barrier function. This is Vitamin K-dependent protein C (Proc) from Rattus norvegicus (Rat).